The sequence spans 245 residues: PF03932 family protein CutC (245 aa).

It belongs to the CutC family.

It is found in the cytoplasm. In Caulobacter vibrioides (strain ATCC 19089 / CIP 103742 / CB 15) (Caulobacter crescentus), this protein is PF03932 family protein CutC.